The following is a 134-amino-acid chain: Ion transport peptide-like (134 aa).

3 disulfide bridges follow: C62–C98, C78–C94, and C81–C107.

The protein belongs to the arthropod CHH/MIH/GIH/VIH hormone family.

The protein resides in the secreted. This chain is Ion transport peptide-like, found in Schistocerca gregaria (Desert locust).